Here is a 554-residue protein sequence, read N- to C-terminus: Undecaprenyl phosphate-alpha-4-amino-4-deoxy-L-arabinose arabinosyl transferase (554 aa).

The next 11 membrane-spanning stretches (helical) occupy residues 4–24 (LKDS…LLPV), 87–107 (FGSI…ATLL), 115–135 (VLAT…TYAV), 178–198 (FMTK…PIVI), 206–226 (LVVF…PWAL), 262–282 (YLPI…GALF), 293–313 (ELFF…VAKG), 315–335 (LPTY…AYAT), 351–371 (VINL…GLGL), 384–404 (QKVW…FITL), and 414–434 (AAAC…QQVV).

This sequence belongs to the glycosyltransferase 83 family.

The protein resides in the cell inner membrane. The enzyme catalyses 4-amino-4-deoxy-alpha-L-arabinopyranosyl di-trans,octa-cis-undecaprenyl phosphate + lipid IVA = lipid IIA + di-trans,octa-cis-undecaprenyl phosphate.. It participates in lipopolysaccharide metabolism; 4-amino-4-deoxy-beta-L-arabinose-lipid A biosynthesis. Catalyzes the transfer of the L-Ara4N moiety of the glycolipid undecaprenyl phosphate-alpha-L-Ara4N to lipid A. The modified arabinose is attached to lipid A and is required for resistance to polymyxin and cationic antimicrobial peptides. This is Undecaprenyl phosphate-alpha-4-amino-4-deoxy-L-arabinose arabinosyl transferase from Yersinia pseudotuberculosis serotype O:1b (strain IP 31758).